The sequence spans 465 residues: Cysteine--tRNA ligase (465 aa).

C30 contacts Zn(2+). The 'HIGH' region signature appears at 32 to 42; it reads MTVYDYCHVGH. C214, H239, and E243 together coordinate Zn(2+). Positions 271–275 match the 'KMSKS' region motif; the sequence is KMSKS. K274 is a binding site for ATP.

The protein belongs to the class-I aminoacyl-tRNA synthetase family. Monomer. Requires Zn(2+) as cofactor.

The protein resides in the cytoplasm. It carries out the reaction tRNA(Cys) + L-cysteine + ATP = L-cysteinyl-tRNA(Cys) + AMP + diphosphate. The chain is Cysteine--tRNA ligase from Ralstonia nicotianae (strain ATCC BAA-1114 / GMI1000) (Ralstonia solanacearum).